Consider the following 313-residue polypeptide: MSTREIRIATRKSALALWQAEYVKARLEQAHTGLQVTLVPMVSRGDKLLDAPLAKIGGKGLFVKELETALLDNEADIAVHSMKDVPMDFPEGLGLYCICEREDPRDAFVSNTFDSLETLPAGSIVGTSSLRRQAQLLARRPDLQIRFLRGNVNTRLAKLDAGEYDAIILAAAGLIRLGFEDRITSTISVDDSLPAGGQGAVGIECRSADVEIHALLAPLHHVDTADRVIAERALNKRLNGGCQVPIACYAVLEGDQLWLRGLVGQPSGGTLLVADARAPRAAAEALGVQVAEDLLGQGAEAILKEVYGEAGHP.

Cysteine 242 is modified (S-(dipyrrolylmethanemethyl)cysteine).

Belongs to the HMBS family. Monomer. It depends on dipyrromethane as a cofactor.

The catalysed reaction is 4 porphobilinogen + H2O = hydroxymethylbilane + 4 NH4(+). It participates in porphyrin-containing compound metabolism; protoporphyrin-IX biosynthesis; coproporphyrinogen-III from 5-aminolevulinate: step 2/4. Tetrapolymerization of the monopyrrole PBG into the hydroxymethylbilane pre-uroporphyrinogen in several discrete steps. The protein is Porphobilinogen deaminase of Pseudomonas putida (strain ATCC 700007 / DSM 6899 / JCM 31910 / BCRC 17059 / LMG 24140 / F1).